The chain runs to 448 residues: Selenide, water dikinase 2 (448 aa).

Ala-2 is modified (N-acetylalanine). Phosphoserine is present on Ser-46. The active site involves Sec-60. Sec-60 is a non-standard amino acid (selenocysteine). Residue Lys-63 coordinates ATP. Positions 85-107 are disordered; sequence LGRGLVGGQEEASQEAGLPAGAG. A Phosphoserine modification is found at Ser-97. Residues 118–120, Asp-138, Asp-161, and 212–215 each bind ATP; these read GMD and GGQT. Asp-120 contacts Mg(2+). Residue Asp-161 participates in Mg(2+) binding. Asp-316 is a Mg(2+) binding site.

The protein belongs to the selenophosphate synthase 1 family. Class I subfamily. Homodimer. Mg(2+) is required as a cofactor. Post-translationally, truncated SEPHS2 proteins produced by failed UGA/Sec decoding are ubiquitinated by the CRL2(KLHDC3) complex, which recognizes the glycine (Gly) at the C-terminus of truncated SEPHS2 proteins.

It catalyses the reaction hydrogenselenide + ATP + H2O = selenophosphate + AMP + phosphate + 2 H(+). Functionally, synthesizes selenophosphate from selenide and ATP. In Homo sapiens (Human), this protein is Selenide, water dikinase 2 (SEPHS2).